Consider the following 575-residue polypeptide: Phosphoenolpyruvate-protein phosphotransferase (575 aa).

The Tele-phosphohistidine intermediate role is filled by H191. The phosphoenolpyruvate site is built by R298 and R334. The Mg(2+) site is built by E435 and D459. Phosphoenolpyruvate is bound by residues 458–459 and R469; that span reads ND. C506 serves as the catalytic Proton donor.

The protein belongs to the PEP-utilizing enzyme family. As to quaternary structure, homodimer. Mg(2+) is required as a cofactor.

The protein localises to the cytoplasm. The enzyme catalyses L-histidyl-[protein] + phosphoenolpyruvate = N(pros)-phospho-L-histidyl-[protein] + pyruvate. Its function is as follows. General (non sugar-specific) component of the phosphoenolpyruvate-dependent sugar phosphotransferase system (sugar PTS). This major carbohydrate active-transport system catalyzes the phosphorylation of incoming sugar substrates concomitantly with their translocation across the cell membrane. Enzyme I transfers the phosphoryl group from phosphoenolpyruvate (PEP) to the phosphoryl carrier protein (HPr). In Lactococcus lactis subsp. cremoris (Streptococcus cremoris), this protein is Phosphoenolpyruvate-protein phosphotransferase (ptsI).